The sequence spans 123 residues: Small ribosomal subunit protein uS13 (123 aa).

The interval 95 to 123 is disordered; that stretch reads GLPVRGQSSKTNARTRKGPRRSVMSRKKK. Positions 107 to 123 are enriched in basic residues; that stretch reads ARTRKGPRRSVMSRKKK.

Belongs to the universal ribosomal protein uS13 family. In terms of assembly, part of the 30S ribosomal subunit. Forms a loose heterodimer with protein S19. Forms two bridges to the 50S subunit in the 70S ribosome.

Located at the top of the head of the 30S subunit, it contacts several helices of the 16S rRNA. In the 70S ribosome it contacts the 23S rRNA (bridge B1a) and protein L5 of the 50S subunit (bridge B1b), connecting the 2 subunits; these bridges are implicated in subunit movement. Contacts the tRNAs in the A and P-sites. The sequence is that of Small ribosomal subunit protein uS13 from Maridesulfovibrio salexigens (strain ATCC 14822 / DSM 2638 / NCIMB 8403 / VKM B-1763) (Desulfovibrio salexigens).